The sequence spans 510 residues: GMP synthase [glutamine-hydrolyzing] (510 aa).

One can recognise a Glutamine amidotransferase type-1 domain in the interval proline 5–asparagine 195. The Nucleophile role is filled by cysteine 82. Catalysis depends on residues histidine 169 and glutamate 171. Residues tryptophan 196–arginine 385 form the GMPS ATP-PPase domain. An ATP-binding site is contributed by serine 223–threonine 229.

Homodimer.

It catalyses the reaction XMP + L-glutamine + ATP + H2O = GMP + L-glutamate + AMP + diphosphate + 2 H(+). Its pathway is purine metabolism; GMP biosynthesis; GMP from XMP (L-Gln route): step 1/1. Functionally, catalyzes the synthesis of GMP from XMP. In Aquifex aeolicus (strain VF5), this protein is GMP synthase [glutamine-hydrolyzing] (guaA).